The sequence spans 127 residues: Ribonuclease P protein component (127 aa).

This sequence belongs to the RnpA family. Consists of a catalytic RNA component (M1 or rnpB) and a protein subunit.

It catalyses the reaction Endonucleolytic cleavage of RNA, removing 5'-extranucleotides from tRNA precursor.. Functionally, RNaseP catalyzes the removal of the 5'-leader sequence from pre-tRNA to produce the mature 5'-terminus. It can also cleave other RNA substrates such as 4.5S RNA. The protein component plays an auxiliary but essential role in vivo by binding to the 5'-leader sequence and broadening the substrate specificity of the ribozyme. The protein is Ribonuclease P protein component of Corynebacterium urealyticum (strain ATCC 43042 / DSM 7109).